The following is a 472-amino-acid chain: Flap endonuclease 1 (472 aa).

The N-domain stretch occupies residues 1 to 106; it reads MGIKGLARFL…EELMKRKERR (106 aa). Aspartate 34 lines the Mg(2+) pocket. The DNA site is built by arginine 47 and arginine 72. Positions 88, 160, 162, 181, and 183 each coordinate Mg(2+). The I-domain stretch occupies residues 124-263; it reads TIRKQLIRTI…LTAYKLLKKH (140 aa). Position 160 (glutamate 160) interacts with DNA. Glycine 241 and aspartate 243 together coordinate DNA. Aspartate 243 lines the Mg(2+) pocket. Positions 348-356 are interaction with PCNA; it reads AQTSLDSFF.

The protein belongs to the XPG/RAD2 endonuclease family. FEN1 subfamily. In terms of assembly, interacts with PCNA. Three molecules of FEN1 bind to one PCNA trimer with each molecule binding to one PCNA monomer. PCNA stimulates the nuclease activity without altering cleavage specificity. It depends on Mg(2+) as a cofactor. Phosphorylated. Phosphorylation upon DNA damage induces relocalization to the nuclear plasma.

The protein resides in the nucleus. It localises to the nucleolus. It is found in the nucleoplasm. The protein localises to the mitochondrion. Its function is as follows. Structure-specific nuclease with 5'-flap endonuclease and 5'-3' exonuclease activities involved in DNA replication and repair. During DNA replication, cleaves the 5'-overhanging flap structure that is generated by displacement synthesis when DNA polymerase encounters the 5'-end of a downstream Okazaki fragment. It enters the flap from the 5'-end and then tracks to cleave the flap base, leaving a nick for ligation. Also involved in the long patch base excision repair (LP-BER) pathway, by cleaving within the apurinic/apyrimidinic (AP) site-terminated flap. Acts as a genome stabilization factor that prevents flaps from equilibrating into structures that lead to duplications and deletions. Also possesses 5'-3' exonuclease activity on nicked or gapped double-stranded DNA, and exhibits RNase H activity. Also involved in replication and repair of rDNA and in repairing mitochondrial DNA. The chain is Flap endonuclease 1 from Cryptosporidium muris (strain RN66).